We begin with the raw amino-acid sequence, 250 residues long: HLA class II histocompatibility antigen, DO alpha chain (250 aa).

The first 25 residues, 1–25 (MALRAGLVLGFHTLMTLLSPQEAGA), serve as a signal peptide directing secretion. The interval 26–110 (TKADHMGSYG…ERSNRSRAIN (85 aa)) is alpha-1. Topologically, residues 26-217 (TKADHMGSYG…VPIPPPDAME (192 aa)) are extracellular. N-linked (GlcNAc...) asparagine glycosylation is found at asparagine 104 and asparagine 144. An alpha-2 region spans residues 111–204 (VPPRVTVLPK…GLDAPLLRHW (94 aa)). Residues 113–205 (PRVTVLPKSR…LDAPLLRHWE (93 aa)) enclose the Ig-like C1-type domain. Cysteine 133 and cysteine 189 are disulfide-bonded. The connecting peptide stretch occupies residues 205 to 217 (ELQVPIPPPDAME). A helical transmembrane segment spans residues 218 to 240 (TLVCALGLAIGLVGFLVGTVLII). Topologically, residues 241-250 (MGTYVSSVPR) are cytoplasmic.

Belongs to the MHC class II family. In terms of assembly, heterodimer of an alpha chain (DOA) and a beta chain (DOB). Forms a heterotetrameric complex with an HLA-DM molecule during intracellular transport in endosomal/lysosomal compartments in B-cells.

It is found in the endosome membrane. Its subcellular location is the lysosome membrane. Functionally, important modulator in the HLA class II restricted antigen presentation pathway by interaction with the HLA-DM molecule in B-cells. Modifies peptide exchange activity of HLA-DM. This is HLA class II histocompatibility antigen, DO alpha chain (HLA-DOA) from Homo sapiens (Human).